A 734-amino-acid polypeptide reads, in one-letter code: Photosystem I P700 chlorophyll a apoprotein A2 (734 aa).

8 consecutive transmembrane segments (helical) span residues 46-69 (IFASHFGQLAIIFLWTSGNLFHVA), 135-158 (LYTGALFLLFLSAISLIGGWLHLQ), 175-199 (LNHHLSGLFGVSSLAWTGHLVHVAI), 273-291 (IAHHHLAIAILFLIAGHMY), 330-353 (IHFQLGLALASLGVITSLVAQHMY), 369-395 (AALYTHHQYIAGFIMTGAFAHGAIFFI), 417-439 (AIISHLSWASLFLGFHTLGLYVH), and 517-535 (FLVHHAIALGLHTTTLILV). The [4Fe-4S] cluster site is built by C559 and C568. 2 helical membrane passes run 575 to 596 (AFYLAVFWMLNTIGWVTFYWHW) and 643 to 665 (LSVWAWMFLFGHLVWATGFMFLI). Chlorophyll a contacts are provided by H654, M662, and Y670. Position 671 (W671) interacts with phylloquinone. Residues 707 to 727 (LVGLAHFSVGYIFTYAAFLIA) traverse the membrane as a helical segment.

This sequence belongs to the PsaA/PsaB family. As to quaternary structure, the PsaA/B heterodimer binds the P700 chlorophyll special pair and subsequent electron acceptors. PSI consists of a core antenna complex that captures photons, and an electron transfer chain that converts photonic excitation into a charge separation. The eukaryotic PSI reaction center is composed of at least 11 subunits. Requires P700 is a chlorophyll a/chlorophyll a' dimer, A0 is one or more chlorophyll a, A1 is one or both phylloquinones and FX is a shared 4Fe-4S iron-sulfur center. as cofactor.

It localises to the plastid. The protein resides in the chloroplast thylakoid membrane. It carries out the reaction reduced [plastocyanin] + hnu + oxidized [2Fe-2S]-[ferredoxin] = oxidized [plastocyanin] + reduced [2Fe-2S]-[ferredoxin]. Its function is as follows. PsaA and PsaB bind P700, the primary electron donor of photosystem I (PSI), as well as the electron acceptors A0, A1 and FX. PSI is a plastocyanin-ferredoxin oxidoreductase, converting photonic excitation into a charge separation, which transfers an electron from the donor P700 chlorophyll pair to the spectroscopically characterized acceptors A0, A1, FX, FA and FB in turn. Oxidized P700 is reduced on the lumenal side of the thylakoid membrane by plastocyanin. The chain is Photosystem I P700 chlorophyll a apoprotein A2 from Aethionema grandiflorum (Persian stone-cress).